Reading from the N-terminus, the 212-residue chain is ER lumen protein-retaining receptor 1 (212 aa).

Residues 1–4 are Lumenal-facing; that stretch reads MNLF. Residues 5 to 24 traverse the membrane as a helical segment; sequence RFLGDLSHLLAIILLLLKIW. Topologically, residues 25–32 are cytoplasmic; the sequence is KSRSCAGI. Residues 33 to 52 traverse the membrane as a helical segment; the sequence is SGKSQVLFAVVFTARYLDLF. The tract at residues 47–48 is interaction with the K-D-E-L motif on target proteins; it reads RY. Topologically, residues 53–58 are lumenal; the sequence is TNYISL. A helical transmembrane segment spans residues 59-79; the sequence is YNTCMKVVYIACSFTTVWMIY. Residues 80-92 are Cytoplasmic-facing; it reads SKFKATYDGNHDT. A helical membrane pass occupies residues 93 to 110; it reads FRVEFLVVPTAVLAFLVN. Residues 111–116 lie on the Lumenal side of the membrane; that stretch reads HDFTPL. Residues 117–135 traverse the membrane as a helical segment; that stretch reads EILWTFSIYLESVAILPQL. Over 136–149 the chain is Cytoplasmic; the sequence is FMVSKTGEAETITS. A helical membrane pass occupies residues 150–168; sequence HYLFALGVYRTLYLFNWIW. Residues 159–169 are interaction with the K-D-E-L motif on target proteins; sequence RTLYLFNWIWR. Residues 169 to 178 are Lumenal-facing; that stretch reads RYHFEGFFDL. A helical membrane pass occupies residues 179-199; sequence IAIVAGLVQTVLYCDFFYLYI. Residues 200–212 are Cytoplasmic-facing; it reads TKVLKGKKLSLPA. The tract at residues 204–207 is important for recycling of cargo proteins with the sequence motif K-D-E-L from the Golgi to the endoplasmic reticulum; it reads KGKK. S209 carries the phosphoserine; by PKA modification.

This sequence belongs to the ERD2 family. In terms of assembly, upon ligand binding the receptor oligomerizes and interacts with components of the transport machinery such as ARFGAP1 and ARF1. Phosphorylation by PKA at Ser-209 is required for endoplasmic reticulum retention function.

It is found in the golgi apparatus membrane. It localises to the cytoplasmic vesicle. The protein resides in the COPI-coated vesicle membrane. The protein localises to the endoplasmic reticulum membrane. Its subcellular location is the endoplasmic reticulum-Golgi intermediate compartment membrane. Its function is as follows. Receptor for the C-terminal sequence motif K-D-E-L that is present on endoplasmic reticulum resident proteins and that mediates their recycling from the Golgi back to the endoplasmic reticulum. In Rattus norvegicus (Rat), this protein is ER lumen protein-retaining receptor 1 (Kdelr1).